The chain runs to 179 residues: MSRLKEKYLNEVSPALMSKFGYKSVMQLPKVEKIVINMGVGDAVQNSKALDAAVEELTIITGQKPVVTKAKKSIAGFRLREGMPIGAKVTLRGERMYEFLDKLISISLPRVRDFRGVSKKAFDGRGNYTLGVKEQLIFPEIDYDKVSKVRGMDIVIVTTANSDEEARELLTQFGMPFQK.

It belongs to the universal ribosomal protein uL5 family. In terms of assembly, part of the 50S ribosomal subunit; part of the 5S rRNA/L5/L18/L25 subcomplex. Contacts the 5S rRNA and the P site tRNA. Forms a bridge to the 30S subunit in the 70S ribosome.

In terms of biological role, this is one of the proteins that bind and probably mediate the attachment of the 5S RNA into the large ribosomal subunit, where it forms part of the central protuberance. In the 70S ribosome it contacts protein S13 of the 30S subunit (bridge B1b), connecting the 2 subunits; this bridge is implicated in subunit movement. Contacts the P site tRNA; the 5S rRNA and some of its associated proteins might help stabilize positioning of ribosome-bound tRNAs. In Lysinibacillus sphaericus (strain C3-41), this protein is Large ribosomal subunit protein uL5.